Reading from the N-terminus, the 142-residue chain is MAAAVAAAGAGEPLSPEELLPKAEAEKAEEELEEDDDDELDETLSERLWGLTEMFPERVRSAAGATFDLSLFVAQKMYRFSRAALWIGTTSFMILVLPVVFETEKLQMEQQQQLQQRQILLGPNTGLSGGMPGALPPLPGKM.

A compositionally biased stretch (low complexity) spans 1 to 18; it reads MAAAVAAAGAGEPLSPEE. Residues 1 to 41 are disordered; it reads MAAAVAAAGAGEPLSPEELLPKAEAEKAEEELEEDDDDELD. The residue at position 2 (Ala-2) is an N-acetylalanine. The Cytoplasmic portion of the chain corresponds to 2-83; sequence AAAVAAAGAG…AQKMYRFSRA (82 aa). Residue Ser-15 is modified to Phosphoserine. Acidic residues predominate over residues 27-41; the sequence is KAEEELEEDDDDELD. The tract at residues 41–50 is import sequence; necessary for mitochondrion outer membrane localization and integration in the TOM complex; the sequence is DETLSERLWG. A Phosphothreonine modification is found at Thr-43. Position 45 is a phosphoserine (Ser-45). The tract at residues 83–103 is TMD; necessary for mitochondrion outer membrane localization and integration in the TOM complex; sequence AALWIGTTSFMILVLPVVFET. A helical membrane pass occupies residues 84–103; the sequence is ALWIGTTSFMILVLPVVFET. Residues 104–142 lie on the Mitochondrial intermembrane side of the membrane; sequence EKLQMEQQQQLQQRQILLGPNTGLSGGMPGALPPLPGKM. Residues 123–142 form a C-tail signal; necessary for mitochondrion outer membrane localization and integration in the TOM complex region; sequence PNTGLSGGMPGALPPLPGKM.

It belongs to the Tom22 family. As to quaternary structure, forms part of the preprotein translocase complex of the outer mitochondrial membrane (TOM complex) which consists of at least 7 different proteins (TOMM5, TOMM6, TOMM7, TOMM20, TOMM22, TOMM40 and TOMM70). Interacts with PPP2R2B and TOMM40.

Its subcellular location is the mitochondrion outer membrane. Its function is as follows. Central receptor component of the translocase of the outer membrane of mitochondria (TOM complex) responsible for the recognition and translocation of cytosolically synthesized mitochondrial preproteins. Together with the peripheral receptor TOM20 functions as the transit peptide receptor and facilitates the movement of preproteins into the translocation pore. Required for the translocation across the mitochondrial outer membrane of cytochrome P450 monooxygenases. This Mus musculus (Mouse) protein is Mitochondrial import receptor subunit TOM22 homolog (Tomm22).